The following is a 609-amino-acid chain: Tyrosyl-DNA phosphodiesterase 1 (609 aa).

Residues 1-12 (MSQESSYGKWTI) are compositionally biased toward polar residues. Residues 1 to 155 (MSQESSYGKW…YETSGEGQDI (155 aa)) form a disordered region. Ser61 carries the post-translational modification Phosphoserine. Basic and acidic residues predominate over residues 105–118 (QPKRVLPQEKKHVS). Phosphoserine is present on residues Ser119 and Ser132. Phosphothreonine is present on Thr148. The residue at position 149 (Ser149) is a Phosphoserine. The Nucleophile role is filled by His264. Lys266 lines the substrate pocket. The tract at residues 401–404 (SIGS) is interaction with DNA. His494 (proton donor/acceptor) is an active-site residue. Lys496 contacts substrate.

Belongs to the tyrosyl-DNA phosphodiesterase family. Monomer. Ubiquitous.

It localises to the nucleus. It is found in the cytoplasm. Its function is as follows. DNA repair enzyme that can remove a variety of covalent adducts from DNA through hydrolysis of a 3'-phosphodiester bond, giving rise to DNA with a free 3' phosphate. Catalyzes the hydrolysis of dead-end complexes between DNA and the topoisomerase I active site tyrosine residue. Hydrolyzes 3'-phosphoglycolates on protruding 3' ends on DNA double-strand breaks due to DNA damage by radiation and free radicals. Acts on blunt-ended double-strand DNA breaks and on single-stranded DNA. Has low 3'exonuclease activity and can remove a single nucleoside from the 3'end of DNA and RNA molecules with 3'hydroxyl groups. Has no exonuclease activity towards DNA or RNA with a 3'phosphate. The polypeptide is Tyrosyl-DNA phosphodiesterase 1 (Tdp1) (Mus musculus (Mouse)).